The sequence spans 511 residues: Maturase K (511 aa).

Belongs to the intron maturase 2 family. MatK subfamily.

The protein resides in the plastid. It localises to the chloroplast. Its function is as follows. Usually encoded in the trnK tRNA gene intron. Probably assists in splicing its own and other chloroplast group II introns. The chain is Maturase K from Nardus stricta (Mat-grass).